The sequence spans 179 residues: ATP synthase subunit b (179 aa).

The helical transmembrane segment at 29–48 (VINLAILIGVLVYFGRGVLG) threads the bilayer.

Belongs to the ATPase B chain family. In terms of assembly, F-type ATPases have 2 components, F(1) - the catalytic core - and F(0) - the membrane proton channel. F(1) has five subunits: alpha(3), beta(3), gamma(1), delta(1), epsilon(1). F(0) has four main subunits: a(1), b(1), b'(1) and c(10-14). The alpha and beta chains form an alternating ring which encloses part of the gamma chain. F(1) is attached to F(0) by a central stalk formed by the gamma and epsilon chains, while a peripheral stalk is formed by the delta, b and b' chains.

The protein resides in the cellular thylakoid membrane. Functionally, f(1)F(0) ATP synthase produces ATP from ADP in the presence of a proton or sodium gradient. F-type ATPases consist of two structural domains, F(1) containing the extramembraneous catalytic core and F(0) containing the membrane proton channel, linked together by a central stalk and a peripheral stalk. During catalysis, ATP synthesis in the catalytic domain of F(1) is coupled via a rotary mechanism of the central stalk subunits to proton translocation. In terms of biological role, component of the F(0) channel, it forms part of the peripheral stalk, linking F(1) to F(0). Its function is as follows. The complex from the organism is particularly stable to disruption and remains functional after 6 hrs at 55 degrees Celsius. The chain is ATP synthase subunit b from Thermosynechococcus vestitus (strain NIES-2133 / IAM M-273 / BP-1).